A 312-amino-acid chain; its full sequence is Malate dehydrogenase (312 aa).

Residues 7–13 (GAAGGIG) and D34 contribute to the NAD(+) site. R81 and R87 together coordinate substrate. Residues N94 and 117–119 (ITN) contribute to the NAD(+) site. Residues N119 and R153 each contribute to the substrate site. H177 functions as the Proton acceptor in the catalytic mechanism. M227 is an NAD(+) binding site.

Belongs to the LDH/MDH superfamily. MDH type 1 family. Homodimer.

The catalysed reaction is (S)-malate + NAD(+) = oxaloacetate + NADH + H(+). Functionally, catalyzes the reversible oxidation of malate to oxaloacetate. The polypeptide is Malate dehydrogenase (Salmonella dublin (strain CT_02021853)).